The sequence spans 103 residues: Large ribosomal subunit protein uL24 (103 aa).

Belongs to the universal ribosomal protein uL24 family. In terms of assembly, part of the 50S ribosomal subunit.

Its function is as follows. One of two assembly initiator proteins, it binds directly to the 5'-end of the 23S rRNA, where it nucleates assembly of the 50S subunit. In terms of biological role, one of the proteins that surrounds the polypeptide exit tunnel on the outside of the subunit. This Listeria innocua serovar 6a (strain ATCC BAA-680 / CLIP 11262) protein is Large ribosomal subunit protein uL24.